A 127-amino-acid polypeptide reads, in one-letter code: Aspartate 1-decarboxylase (127 aa).

Residue serine 25 is the Schiff-base intermediate with substrate; via pyruvic acid of the active site. Serine 25 carries the pyruvic acid (Ser) modification. Threonine 57 contributes to the substrate binding site. The active-site Proton donor is the tyrosine 58. Position 73 to 75 (73 to 75 (GAA)) interacts with substrate.

It belongs to the PanD family. In terms of assembly, heterooctamer of four alpha and four beta subunits. The cofactor is pyruvate. Is synthesized initially as an inactive proenzyme, which is activated by self-cleavage at a specific serine bond to produce a beta-subunit with a hydroxyl group at its C-terminus and an alpha-subunit with a pyruvoyl group at its N-terminus.

It is found in the cytoplasm. It carries out the reaction L-aspartate + H(+) = beta-alanine + CO2. It functions in the pathway cofactor biosynthesis; (R)-pantothenate biosynthesis; beta-alanine from L-aspartate: step 1/1. Functionally, catalyzes the pyruvoyl-dependent decarboxylation of aspartate to produce beta-alanine. This Clostridium botulinum (strain Okra / Type B1) protein is Aspartate 1-decarboxylase.